Reading from the N-terminus, the 67-residue chain is Protein Tpau_2998 (67 aa).

The polypeptide is Protein Tpau_2998 (Tsukamurella paurometabola (strain ATCC 8368 / DSM 20162 / CCUG 35730 / CIP 100753 / JCM 10117 / KCTC 9821 / NBRC 16120 / NCIMB 702349 / NCTC 13040) (Corynebacterium paurometabolum)).